The sequence spans 170 residues: Ubiquitin-conjugating enzyme E2 J2-like (170 aa).

Residues 15–165 (DCITRLKREF…NKTFCELFPY (151 aa)) form the UBC core domain. Cys97 acts as the Glycyl thioester intermediate in catalysis.

This sequence belongs to the ubiquitin-conjugating enzyme family.

The catalysed reaction is S-ubiquitinyl-[E1 ubiquitin-activating enzyme]-L-cysteine + [E2 ubiquitin-conjugating enzyme]-L-cysteine = [E1 ubiquitin-activating enzyme]-L-cysteine + S-ubiquitinyl-[E2 ubiquitin-conjugating enzyme]-L-cysteine.. It functions in the pathway protein modification; protein ubiquitination. In terms of biological role, catalyzes the covalent attachment of ubiquitin to other proteins. The polypeptide is Ubiquitin-conjugating enzyme E2 J2-like (Dictyostelium discoideum (Social amoeba)).